Here is a 153-residue protein sequence, read N- to C-terminus: MSKHSLIENLKKQIEPIVEGLNYELYHIEFVKEGKENYLRIYIDSENGVSLEGCEKVSRAVSELLDDIDPIQESYYLEVSSPGIDRVLYTDKHLEKYKGYNIVLNLYSSIDKKKKYEGELVDFNENEINIKVEENIVTIPREKISKTTLKGEL.

The protein belongs to the RimP family.

It localises to the cytoplasm. Functionally, required for maturation of 30S ribosomal subunits. This Clostridium botulinum (strain 657 / Type Ba4) protein is Ribosome maturation factor RimP.